Reading from the N-terminus, the 827-residue chain is Discs large homolog 1-like protein (827 aa).

Disordered regions lie at residues 38–61 and 102–133; these read HQDE…TPGP and SPVV…ANPP. A compositionally biased stretch (polar residues) spans 44 to 56; that stretch reads GSPQEPSSPQFTD. 3 PDZ domains span residues 159–246, 254–341, and 403–484; these read EITL…RRRK, EIKL…AKPN, and KVVL…QYRP. In terms of domain architecture, SH3 spans 518 to 588; that stretch reads KRSLYVRALF…PSKRRVEKKE (71 aa). A disordered region spans residues 595-618; it reads VKFNSKSREKGDNPDDMLSKGQSG. Residues 637–812 enclose the Guanylate kinase-like domain; it reads SRPVIILGPM…IYDQVKQIIE (176 aa).

It belongs to the MAGUK family.

The protein resides in the membrane. May play a role in synapse assembly and function. This chain is Discs large homolog 1-like protein (dlg1l), found in Danio rerio (Zebrafish).